Consider the following 1020-residue polypeptide: 26S proteasome non-ATPase regulatory subunit 1 (1020 aa).

The tract at residues threonine 279–threonine 322 is disordered. The span at leucine 281–glutamate 293 shows a compositional bias: polar residues. At threonine 291 the chain carries Phosphothreonine. Over residues aspartate 294 to glutamate 307 the composition is skewed to basic and acidic residues. Serine 298, serine 303, and serine 305 each carry phosphoserine. Position 310 is a phosphothreonine (threonine 310). PC repeat units lie at residues threonine 418–tyrosine 452, glycine 456–arginine 489, glycine 491–glutamate 525, alanine 526–leucine 560, glycine 562–arginine 595, serine 596–arginine 631, alanine 632–arginine 664, glycine 666–glutamine 701, glycine 702–alanine 742, and glycine 745–valine 777. 2 disordered regions span residues glutamine 855 to arginine 950 and phenylalanine 999 to aspartate 1020. Basic and acidic residues-rich tracts occupy residues arginine 858–glutamate 867 and lysine 876–glutamate 939. The span at asparagine 1003–aspartate 1020 shows a compositional bias: acidic residues.

Belongs to the proteasome subunit S1 family.

Its function is as follows. Acts as a regulatory subunit of the 26S proteasome which is involved in the ATP-dependent degradation of ubiquitinated proteins. The sequence is that of 26S proteasome non-ATPase regulatory subunit 1 (Rpn2) from Drosophila melanogaster (Fruit fly).